The following is a 243-amino-acid chain: Voltage-gated monoatomic cation channel TMEM109 (243 aa).

The N-terminal stretch at 1 to 33 (MAASSISSPWGKHVFKAILMVLVALILLHSALA) is a signal peptide. Residues 34 to 83 (QSRRDFAPPGQQKREAPVDVLTQIGRSVRGTLDAWIGPETMHLVSESSSQ) lie on the Lumenal side of the membrane. Residues 84–104 (VLWAISSAISVAFFALSGIAA) form a helical membrane-spanning segment. At 105–135 (QLLNALGLAGDYLAQGLKLSPGQVQTFLLWG) the chain is on the cytoplasmic side. Residues 136–156 (AGALVVYWLLSLLLGLVLALL) traverse the membrane as a helical segment. At 157-185 (GRILWGLKLVIFLAGFVALMRSVPDPSTR) the chain is on the lumenal side. The helical transmembrane segment at 186–205 (ALLLLALLILYALLSRLTGS) threads the bilayer. The Cytoplasmic segment spans residues 206–243 (RASGAQLEAKVRGLERQVEELRWRQRRAAKGARSVEEE).

In terms of assembly, homooligomer. Interacts with CRYAB; in the cellular response to DNA damage.

It localises to the nucleus outer membrane. The protein resides in the endoplasmic reticulum membrane. The protein localises to the sarcoplasmic reticulum membrane. It carries out the reaction K(+)(in) = K(+)(out). The catalysed reaction is Ca(2+)(in) = Ca(2+)(out). Functions as a voltage-gated monoatomic cation channel permeable to both potassium and calcium. Plays a role in the cellular response to DNA damage. This chain is Voltage-gated monoatomic cation channel TMEM109, found in Homo sapiens (Human).